We begin with the raw amino-acid sequence, 1338 residues long: Serine/threonine-protein kinase cek1 (1338 aa).

In terms of domain architecture, PAS spans 28-98 (SKDENLQPSI…RAVNCLLKDD (71 aa)). The segment at 484–554 (PDFAIGSPMS…GRSSLFSRGR (71 aa)) is disordered. The segment covering 491 to 501 (PMSQDSSNYSS) has biased composition (polar residues). S525 is modified (phosphoserine). Residues 541 to 550 (PASNGRSSLF) show a composition bias toward polar residues. The 370-residue stretch at 589–958 (YKILKPISKG…VEEIKAHPFF (370 aa)) folds into the Protein kinase domain. Residues 595–603 (ISKGAFGSV) and K618 each bind ATP. Catalysis depends on D713, which acts as the Proton acceptor. S748 carries the phosphoserine modification. Residues 813 to 842 (ENSAEDSPTATNTPTSQVDESNIFRSTDSP) are compositionally biased toward polar residues. Disordered stretches follow at residues 813–844 (ENSA…SPRV), 1010–1035 (KLEE…LRSN), and 1159–1185 (SSTM…TSSD). The AGC-kinase C-terminal domain occupies 959 to 1057 (KSVNWDTILE…RNLDFLNKAN (99 aa)). Over residues 1159–1174 (SSTMSASQSQSSMHTA) the composition is skewed to low complexity. S1211 bears the Phosphoserine mark.

The protein belongs to the protein kinase superfamily. Ser/Thr protein kinase family.

The catalysed reaction is L-seryl-[protein] + ATP = O-phospho-L-seryl-[protein] + ADP + H(+). The enzyme catalyses L-threonyl-[protein] + ATP = O-phospho-L-threonyl-[protein] + ADP + H(+). In terms of biological role, may facilitate the progression of anaphase through direct or indirect interaction with the cut8 protein. This chain is Serine/threonine-protein kinase cek1 (cek1), found in Schizosaccharomyces pombe (strain 972 / ATCC 24843) (Fission yeast).